The primary structure comprises 512 residues: Mucin-13 (512 aa).

The first 18 residues, Met1–Ala18, serve as a signal peptide directing secretion. At Thr19–Leu421 the chain is on the extracellular side. The span at Gly22–Pro38 shows a compositional bias: polar residues. Disordered regions lie at residues Gly22–Thr67 and Met133–Pro176. The span at Thr53–Thr67 shows a compositional bias: low complexity. Positions Pro135–Pro176 are enriched in polar residues. 2 N-linked (GlcNAc...) asparagine glycosylation sites follow: Asn151 and Asn169. One can recognise an EGF-like 1 domain in the interval Pro173 to Lys211. 3 disulfide bridges follow: Cys177–Cys188, Cys182–Cys197, and Cys199–Cys210. N-linked (GlcNAc...) asparagine glycosylation is found at Asn193, Asn206, Asn284, and Asn332. In terms of domain architecture, SEA spans Lys212–Asp336. EGF-like domains are found at residues Leu322–Val361 and Ser363–Gln404. 6 disulfides stabilise this stretch: Cys326–Cys338, Cys331–Cys344, Cys346–Cys360, Cys367–Cys378, Cys371–Cys389, and Cys391–Cys403. The helical transmembrane segment at Ile422–Ile442 threads the bilayer. The Cytoplasmic segment spans residues Val443–Tyr512. The segment covering Arg493–Ser505 has biased composition (polar residues). The segment at Arg493–Tyr512 is disordered.

As to quaternary structure, homodimer of beta subunits. Post-translationally, cleaved into two subunits, alpha and beta, probably between the first EGF domain and the SEA domain. Beta subunit contains the cytoplasmic tail and alpha subunit the extracellular tail. The homooligomerization into dimers is dependent on intrachain disulfide bonds. Highly N-glycosylated. Highly expressed in epithelial tissues, particularly those of the gastrointestinal and respiratory tracts, such as large intestine and trachea, followed by kidney, small intestine, appendix and stomach.

Its subcellular location is the cell membrane. It localises to the apical cell membrane. It is found in the secreted. Epithelial and hemopoietic transmembrane mucin that may play a role in cell signaling. This Homo sapiens (Human) protein is Mucin-13 (MUC13).